Reading from the N-terminus, the 495-residue chain is uncharacterized protein (495 aa).

The next 12 membrane-spanning stretches (helical) occupy residues 43–63 (IIISFMTMLCMYGSSVFMPSI), 75–95 (TLVVLGATLYVIGVMLGPLIF), 106–126 (PLNIFGYTLFALMQIPTALSV), 128–148 (LAMFVVFRFFSGFFGSVGLGI), 168–188 (IYFLGICLGPAIAPIASGFIA), 196–216 (WEFWILLMLSGVSLLAGVVFL), 284–304 (PIMILISLIVGTVYGILYLLF), 323–343 (GLTYISLSIGQVFAVFVLLPL), 366–386 (PMAFLGCFAIMTGMFIFGWTV), 390–410 (VFWFVPLIGTTLVGAGFVMTF), 426–446 (ASAMAAIAIPRNIFGACFPLF), and 461–481 (SLLAFLLVAINFSIAALYMFG).

It belongs to the major facilitator superfamily. CAR1 family.

Its subcellular location is the membrane. This is an uncharacterized protein from Schizosaccharomyces pombe (strain 972 / ATCC 24843) (Fission yeast).